A 262-amino-acid chain; its full sequence is Hydroxyethylthiazole kinase (262 aa).

Substrate is bound at residue Met50. ATP contacts are provided by Arg125 and Thr171. Gly198 contacts substrate.

It belongs to the Thz kinase family. The cofactor is Mg(2+).

The enzyme catalyses 5-(2-hydroxyethyl)-4-methylthiazole + ATP = 4-methyl-5-(2-phosphooxyethyl)-thiazole + ADP + H(+). It participates in cofactor biosynthesis; thiamine diphosphate biosynthesis; 4-methyl-5-(2-phosphoethyl)-thiazole from 5-(2-hydroxyethyl)-4-methylthiazole: step 1/1. Functionally, catalyzes the phosphorylation of the hydroxyl group of 4-methyl-5-beta-hydroxyethylthiazole (THZ). This is Hydroxyethylthiazole kinase from Shigella sonnei (strain Ss046).